The primary structure comprises 338 residues: uncharacterized protein (338 aa).

This is an uncharacterized protein from Thermoproteus tenax (TTV1).